A 286-amino-acid chain; its full sequence is Phosphatidylserine decarboxylase proenzyme (286 aa).

Catalysis depends on charge relay system; for autoendoproteolytic cleavage activity residues D90, H147, and S252. S252 serves as the catalytic Schiff-base intermediate with substrate; via pyruvic acid; for decarboxylase activity. S252 carries the post-translational modification Pyruvic acid (Ser); by autocatalysis.

The protein belongs to the phosphatidylserine decarboxylase family. PSD-B subfamily. Prokaryotic type I sub-subfamily. Heterodimer of a large membrane-associated beta subunit and a small pyruvoyl-containing alpha subunit. Pyruvate is required as a cofactor. Post-translationally, is synthesized initially as an inactive proenzyme. Formation of the active enzyme involves a self-maturation process in which the active site pyruvoyl group is generated from an internal serine residue via an autocatalytic post-translational modification. Two non-identical subunits are generated from the proenzyme in this reaction, and the pyruvate is formed at the N-terminus of the alpha chain, which is derived from the carboxyl end of the proenzyme. The autoendoproteolytic cleavage occurs by a canonical serine protease mechanism, in which the side chain hydroxyl group of the serine supplies its oxygen atom to form the C-terminus of the beta chain, while the remainder of the serine residue undergoes an oxidative deamination to produce ammonia and the pyruvoyl prosthetic group on the alpha chain. During this reaction, the Ser that is part of the protease active site of the proenzyme becomes the pyruvoyl prosthetic group, which constitutes an essential element of the active site of the mature decarboxylase.

It localises to the cell membrane. The catalysed reaction is a 1,2-diacyl-sn-glycero-3-phospho-L-serine + H(+) = a 1,2-diacyl-sn-glycero-3-phosphoethanolamine + CO2. The protein operates within phospholipid metabolism; phosphatidylethanolamine biosynthesis; phosphatidylethanolamine from CDP-diacylglycerol: step 2/2. In terms of biological role, catalyzes the formation of phosphatidylethanolamine (PtdEtn) from phosphatidylserine (PtdSer). The chain is Phosphatidylserine decarboxylase proenzyme from Pseudomonas fluorescens (strain Pf0-1).